We begin with the raw amino-acid sequence, 295 residues long: GTPase Era (295 aa).

Positions 7–176 (KTISVCIIGR…IKSKAKVSPW (170 aa)) constitute an Era-type G domain. Positions 15-22 (GRPNSGKS) are G1. 15 to 22 (GRPNSGKS) contacts GTP. Positions 41-45 (QTTRS) are G2. The G3 stretch occupies residues 62–65 (DTPG). Residues 62–66 (DTPGI) and 124–127 (NKID) contribute to the GTP site. The interval 124–127 (NKID) is G4. The G5 stretch occupies residues 152–154 (ISA). Residues 204–281 (LQQELPYKLT…HLFLFVKVHA (78 aa)) enclose the KH type-2 domain.

It belongs to the TRAFAC class TrmE-Era-EngA-EngB-Septin-like GTPase superfamily. Era GTPase family. As to quaternary structure, monomer.

Its subcellular location is the cytoplasm. It localises to the cell inner membrane. An essential GTPase that binds both GDP and GTP, with rapid nucleotide exchange. Plays a role in 16S rRNA processing and 30S ribosomal subunit biogenesis and possibly also in cell cycle regulation and energy metabolism. In Rickettsia prowazekii (strain Madrid E), this protein is GTPase Era.